A 496-amino-acid chain; its full sequence is Probable ATP-dependent DNA helicase RecS (496 aa).

In terms of domain architecture, Helicase ATP-binding spans 25-192 (IESILSGKDT…MNLLELQHAV (168 aa)). ATP is bound at residue 38-45 (LPTGGGKS). The DEAH box signature appears at 136–139 (DEAH). The Helicase C-terminal domain occupies 219–363 (RVIQLVENLQ…EIADVIRVLE (145 aa)).

The protein belongs to the helicase family. RecQ subfamily. As to quaternary structure, interacts with SSB (ssbA) and YpbB.

Its subcellular location is the cytoplasm. The protein localises to the nucleoid. It catalyses the reaction Couples ATP hydrolysis with the unwinding of duplex DNA by translocating in the 3'-5' direction.. The enzyme catalyses ATP + H2O = ADP + phosphate + H(+). In terms of biological role, probable 3'-5' DNA helicase. Required in synaptic and/or post-synaptic stages of recombination. Probably has an overlapping function with RecQ. It probably acts to help generate ss-DNA from ds-DNA breaks. The chain is Probable ATP-dependent DNA helicase RecS from Bacillus subtilis (strain 168).